Reading from the N-terminus, the 519-residue chain is MGAPGRVLLWLQLCALTRAAYKLWVPNTYFDAADNWSQNQTPCAGAAVKFPADKMVSVLVREGHSISDMEELQDRKRENIHSFIHCSFIDRASPPASPFRCPAARTGALLPVQSLQCTCILAHRPLLPLDGEFVLASGAGFSAQNTGSHLDCSAGASALFLDPDRFLWHDPRLWSAGDAGRSLFSVDAERVPCRHDDAVFPSDASFRVGLGPGTVRVRSVRALGQTFTRDEDLAAFLASRAGRLRFHGSGALSVDPEACADPSGCVCGNAEVQPWICAALLQPLGGRCPQAACQDALRPEGQCCDLCGAIVSLTHGPAFDLERYRARLLHAFLALPQYQGLRMAMSKVPRQPHLHEASGAKADTEIQVVLAETGPETGSAGRLARALLADIAEHGEALGVLSATARESGPPVGGSSAAGLNAPGARSDLMGGLVAALLLLLLVLLVAALLLRRAGRLRWSRRHEAASEPAGTPLGFRNPVFYTADSVDPPPAPQPDVRSSSRSYFINPLYGEAEAEAEA.

The first 19 residues, 1–19 (MGAPGRVLLWLQLCALTRA), serve as a signal peptide directing secretion. The Extracellular segment spans residues 20-430 (AYKLWVPNTY…NAPGARSDLM (411 aa)). N-linked (GlcNAc...) asparagine glycans are attached at residues Asn35 and Asn39. Disulfide bonds link Cys43–Cys152, Cys193–Cys267, Cys259–Cys265, Cys277–Cys303, Cys288–Cys304, and Cys293–Cys307. The segment at 67 to 143 (SDMEELQDRK…VLASGAGFSA (77 aa)) is interaction with CUBN. The region spanning 256-308 (PEACADPSGCVCGNAEVQPWICAALLQPLGGRCPQAACQDALRPEGQCCDLCG) is the VWFC domain. The helical transmembrane segment at 431 to 451 (GGLVAALLLLLLVLLVAALLL) threads the bilayer. Over 452 to 519 (RRAGRLRWSR…YGEAEAEAEA (68 aa)) the chain is Cytoplasmic.

As to quaternary structure, interacts (via extracellular region) with CUBN/cubilin, giving rise to a huge complex containing one AMN chain and three CUBN chains. N-glycosylated. Post-translationally, a soluble form arises by proteolytic removal of the membrane anchor. In terms of tissue distribution, detected in kidney cortex (at protein level).

It localises to the apical cell membrane. The protein resides in the cell membrane. Its subcellular location is the endosome membrane. It is found in the membrane. The protein localises to the coated pit. Its function is as follows. Membrane-bound component of the endocytic receptor formed by AMN and CUBN. Required for normal CUBN glycosylation and trafficking to the cell surface. The complex formed by AMN and CUBN is required for efficient absorption of vitamin B12. Required for normal CUBN-mediated protein transport in the kidney. The sequence is that of Protein amnionless (AMN) from Sus scrofa (Pig).